The primary structure comprises 109 residues: Tyrosine-protein phosphatase 16 (109 aa).

Residues 1-109 (WRMVTEHTST…RIKTQKPIVV (109 aa)) form the Tyrosine-protein phosphatase domain. Asp-81 lines the substrate pocket.

It belongs to the protein-tyrosine phosphatase family.

It carries out the reaction O-phospho-L-tyrosyl-[protein] + H2O = L-tyrosyl-[protein] + phosphate. The protein is Tyrosine-protein phosphatase 16 (STY-16) of Styela plicata (Wrinkled sea squirt).